The chain runs to 89 residues: Large ribosomal subunit protein bL27 (89 aa).

The interval methionine 1–phenylalanine 26 is disordered.

The protein belongs to the bacterial ribosomal protein bL27 family.

The sequence is that of Large ribosomal subunit protein bL27 from Maridesulfovibrio salexigens (strain ATCC 14822 / DSM 2638 / NCIMB 8403 / VKM B-1763) (Desulfovibrio salexigens).